A 139-amino-acid chain; its full sequence is Large ribosomal subunit protein uL16c (139 aa).

The span at 1 to 17 shows a compositional bias: basic residues; it reads MLSPKKTKFRKQHRGRM. Residues 1–23 form a disordered region; sequence MLSPKKTKFRKQHRGRMKGSASK.

The protein belongs to the universal ribosomal protein uL16 family. As to quaternary structure, part of the 50S ribosomal subunit.

It localises to the plastid. The protein localises to the chloroplast. The sequence is that of Large ribosomal subunit protein uL16c from Pyropia yezoensis (Susabi-nori).